The sequence spans 519 residues: Cytochrome P450 88A1 (519 aa).

Residues 1–21 (MLGVGMAAAVLLGAVALLLAD) traverse the membrane as a helical segment. Cys-466 is a heme binding site.

It belongs to the cytochrome P450 family. Heme serves as cofactor. Expressed in roots, developing leaves, the vegetative meristem, and suspension culture cells.

Its subcellular location is the membrane. Its pathway is plant hormone biosynthesis; gibberellin biosynthesis. This is Cytochrome P450 88A1 (CYP88A1) from Zea mays (Maize).